The chain runs to 405 residues: Elongation factor Tu (405 aa).

The tr-type G domain occupies 10–213 (KEHVNVGTIG…AMDEYIPTPQ (204 aa)). Residues 19-26 (GHVDHGKS) are G1. 19 to 26 (GHVDHGKS) contributes to the GTP binding site. Ser-26 contributes to the Mg(2+) binding site. The tract at residues 64-68 (GITIN) is G2. The G3 stretch occupies residues 85–88 (DCPG). Residues 85–89 (DCPGH) and 140–143 (NKCD) each bind GTP. A G4 region spans residues 140 to 143 (NKCD). A G5 region spans residues 178-180 (SAL).

It belongs to the TRAFAC class translation factor GTPase superfamily. Classic translation factor GTPase family. EF-Tu/EF-1A subfamily. Monomer.

The protein resides in the cytoplasm. It catalyses the reaction GTP + H2O = GDP + phosphate + H(+). Functionally, GTP hydrolase that promotes the GTP-dependent binding of aminoacyl-tRNA to the A-site of ribosomes during protein biosynthesis. This is Elongation factor Tu from Aquifex aeolicus (strain VF5).